A 342-amino-acid chain; its full sequence is Ribosomal RNA small subunit methyltransferase C (342 aa).

It belongs to the methyltransferase superfamily. RsmC family. Monomer.

Its subcellular location is the cytoplasm. It catalyses the reaction guanosine(1207) in 16S rRNA + S-adenosyl-L-methionine = N(2)-methylguanosine(1207) in 16S rRNA + S-adenosyl-L-homocysteine + H(+). Functionally, specifically methylates the guanine in position 1207 of 16S rRNA in the 30S particle. This Salmonella paratyphi A (strain ATCC 9150 / SARB42) protein is Ribosomal RNA small subunit methyltransferase C.